Here is a 76-residue protein sequence, read N- to C-terminus: DNA-directed RNA polymerase subunit Rpo10 (76 aa).

Zn(2+)-binding residues include Cys16, Cys19, Cys53, and Cys54.

It belongs to the archaeal Rpo10/eukaryotic RPB10 RNA polymerase subunit family. As to quaternary structure, part of the RNA polymerase complex. It depends on Zn(2+) as a cofactor.

It is found in the cytoplasm. The catalysed reaction is RNA(n) + a ribonucleoside 5'-triphosphate = RNA(n+1) + diphosphate. DNA-dependent RNA polymerase (RNAP) catalyzes the transcription of DNA into RNA using the four ribonucleoside triphosphates as substrates. This is DNA-directed RNA polymerase subunit Rpo10 from Archaeoglobus fulgidus (strain ATCC 49558 / DSM 4304 / JCM 9628 / NBRC 100126 / VC-16).